A 294-amino-acid chain; its full sequence is 4-hydroxy-tetrahydrodipicolinate synthase (294 aa).

Thr-44 is a binding site for pyruvate. Tyr-132 acts as the Proton donor/acceptor in catalysis. Lys-160 acts as the Schiff-base intermediate with substrate in catalysis. Val-202 provides a ligand contact to pyruvate.

The protein belongs to the DapA family. Homotetramer; dimer of dimers.

It is found in the cytoplasm. The enzyme catalyses L-aspartate 4-semialdehyde + pyruvate = (2S,4S)-4-hydroxy-2,3,4,5-tetrahydrodipicolinate + H2O + H(+). Its pathway is amino-acid biosynthesis; L-lysine biosynthesis via DAP pathway; (S)-tetrahydrodipicolinate from L-aspartate: step 3/4. Its function is as follows. Catalyzes the condensation of (S)-aspartate-beta-semialdehyde [(S)-ASA] and pyruvate to 4-hydroxy-tetrahydrodipicolinate (HTPA). This is 4-hydroxy-tetrahydrodipicolinate synthase from Leptospira biflexa serovar Patoc (strain Patoc 1 / Ames).